A 605-amino-acid chain; its full sequence is Cystathionine gamma-synthase-like enzyme iboG1 (605 aa).

Residue Tyr289 coordinates substrate. An N6-(pyridoxal phosphate)lysine modification is found at Lys393.

Belongs to the trans-sulfuration enzymes family. It depends on pyridoxal 5'-phosphate as a cofactor.

It functions in the pathway secondary metabolite biosynthesis. Cystathionine gamma-synthase-like enzyme; part of the gene cluster that mediates the biosynthesis of the psychoactive metabolites ibotenic acid and muscimol. The first committed step is glutamate hydroxylation by the 2-oxoglutarate-dependent dioxygenase iboH, and the last step is decarboxylation of ibotenic acid to muscimol by the decarboxylase iboD. The order of the intermediate reactions is somewhat ambiguous. IboA likely activates the carboxylic acid at position 5 to introduce an amide bond, and the flavin monooxygenase iboF generates the N-O bond. There are several options for the latter step. One option is that iboF directly hydroxylates the amide nitrogen formed by iboA to produce a hydroxamic acid species. Another option is that iboF hydroxylates an external N-containing compound, whose resulting N-O bond is subsequently introduced into the hydroxyglutamate scaffold. The paralogous PLP-dependent cystathionine gamma-synthase-like enzymes iboG1 and iboG2 are likely involved in substitution of the OH group at position 3 by the O-N moiety. The first cyclic intermediate is most probably tricholomic acid which is likely desaturated to ibotenic acid by the cytochrome P450 monooxygenase iboC. This Amanita muscaria (strain Koide BX008) protein is Cystathionine gamma-synthase-like enzyme iboG1 (iboG1).